The following is a 344-amino-acid chain: Methionine import ATP-binding protein MetN 1 (344 aa).

The region spanning 2–241 (IEIRNISQRF…PHHEVTRALI (240 aa)) is the ABC transporter domain. Residue 38–45 (GRSGAGKS) participates in ATP binding.

This sequence belongs to the ABC transporter superfamily. Methionine importer (TC 3.A.1.24) family. The complex is composed of two ATP-binding proteins (MetN), two transmembrane proteins (MetI) and a solute-binding protein (MetQ).

It localises to the cell inner membrane. It carries out the reaction L-methionine(out) + ATP + H2O = L-methionine(in) + ADP + phosphate + H(+). The catalysed reaction is D-methionine(out) + ATP + H2O = D-methionine(in) + ADP + phosphate + H(+). In terms of biological role, part of the ABC transporter complex MetNIQ involved in methionine import. Responsible for energy coupling to the transport system. This chain is Methionine import ATP-binding protein MetN 1, found in Paraburkholderia xenovorans (strain LB400).